We begin with the raw amino-acid sequence, 240 residues long: Ubiquinone biosynthesis O-methyltransferase (240 aa).

S-adenosyl-L-methionine is bound by residues Arg44, Gly64, Asp85, and Met129.

The protein belongs to the methyltransferase superfamily. UbiG/COQ3 family.

It carries out the reaction a 3-demethylubiquinol + S-adenosyl-L-methionine = a ubiquinol + S-adenosyl-L-homocysteine + H(+). It catalyses the reaction a 3-(all-trans-polyprenyl)benzene-1,2-diol + S-adenosyl-L-methionine = a 2-methoxy-6-(all-trans-polyprenyl)phenol + S-adenosyl-L-homocysteine + H(+). It participates in cofactor biosynthesis; ubiquinone biosynthesis. O-methyltransferase that catalyzes the 2 O-methylation steps in the ubiquinone biosynthetic pathway. This chain is Ubiquinone biosynthesis O-methyltransferase, found in Escherichia coli O127:H6 (strain E2348/69 / EPEC).